Reading from the N-terminus, the 796-residue chain is MEGLTLSDAEQKYYSDLFSYCDIESTKKVVVNGRVLELFRAAQLPNDVVLQIMELCGATRLGYFGRSQFYIALKLVAVAQSGFPLRVESINTVKDLPLPRFVASKNEQESRHAASYSSDSENQGSYSGVIPPPPGRGQVKKGSVSHDTVQPRTSADAQEPASPVVSPQQSPPTSPHTWRKHSRHPSGGNSERPLAGPGPFWSPFGEAQSGSSAGDAVWSGHSPPPPQENWVSFADTPPTSTLLTMHPASVQDQTTVRTVASATTAIEIRRQSSSYDDPWKITDEQRQYYVNQFKTIQPDLNGFIPGSAAKEFFTKSKLPILELSHIWELSDFDKDGALTLDEFCAAFHLVVARKNGYDLPEKLPESLMPKLIDLEDSADVGDQPGEVGYSGSPAEAPPSKSPSMPSLNQTWPELNQSSEQWETFSERSSSSQTLTQFDSNIAPADPDTAIVHPVPIRMTPSKIHMQEMELKRTGSDHTNPTSPLLVKPSDLLEENKINSSVKFASGNTVADGYSSSDSFTSDPEQIGSNVTRQRSHSGTSPDNTAPPPPPPRPQPSHSRSSSLDMNRTFTVTTGQQQAGVVAHPPAVPPRPQPSQAPGPAVHRPVDADGLITHTSTSPQQIPEQPNFADFSQFEVFAASNVNDEQDDEAEKHPEVLPAEKASDPASSLRVAKTDSKTEEKTAASAPANVSKGTTPLAPPPKPVRRRLKSEDELRPEVDEHTQKTGVLAAVLASQPSIPRSVGKDKKAIQASIRRNKETNTVLARLNSELQQQLKDVLEERISLEVQLEQLRPFSHL.

The 104-residue stretch at E10–A113 folds into the EH 1 domain. Positions K105–P237 are disordered. Polar residues predominate over residues S115 to Y126. 5 positions are modified to phosphoserine: S143, S145, S162, S166, and S170. Over residues S145–D156 the composition is skewed to polar residues. Residue T173 is modified to Phosphothreonine. A phosphoserine mark is found at S272 and S273. Residues Q285–L374 enclose the EH 2 domain. Residue Y288 is modified to Phosphotyrosine. S307 carries the post-translational modification Phosphoserine. The region spanning L318–R353 is the EF-hand domain. Ca(2+) is bound by residues D331, D333, D335, and E342. Positions S377–T433 are disordered. Over residues L407–T433 the composition is skewed to polar residues. Phosphoserine is present on residues S475, S482, S489, and S540. Positions G506–N543 are enriched in polar residues. Disordered stretches follow at residues G506–Q624 and A638–G725. A Phosphothreonine modification is found at T544. Residues T544–Q554 are compositionally biased toward pro residues. S562 bears the Phosphoserine mark. Polar residues predominate over residues L563 to G574. A compositionally biased stretch (low complexity) spans Q575–P584. Positions P585 to A596 are enriched in pro residues. Polar residues predominate over residues T612–E623. An interaction with RALBP1 region spans residues H652–L796. Composition is skewed to basic and acidic residues over residues A671–T681 and K708–Q722. 2 positions are modified to phosphoserine: S709 and S740. Residues S751–R791 adopt a coiled-coil conformation.

Homodimer (Potential). Interacts with RAB11FIP2. Interacts with RALBP1, CRK and GRB2. Binding to RALBP1 does not affect its Ral-binding activity. Forms a complex with the SH3 domains of CRK and GRB2 which may link it to an EGF-responsive tyrosine kinase. Interacts with AMPH, ITSN1 (via SH3 domains) and SGIP1; may be involved in clathrin-mediated endocytosis. Post-translationally, EGF stimulates phosphorylation on Tyr-residues. In terms of tissue distribution, widely expressed with highest levels in heart and testis.

It localises to the membrane. It is found in the clathrin-coated pit. Its function is as follows. May coordinate the cellular actions of activated EGF receptors and Ral-GTPases. The sequence is that of RalBP1-associated Eps domain-containing protein 1 (REPS1) from Homo sapiens (Human).